Here is a 507-residue protein sequence, read N- to C-terminus: Sperm-associated antigen 6 (507 aa).

8 ARM repeats span residues Pro-31 to Asn-70, Asp-73 to Lys-112, Pro-115 to Arg-154, Thr-157 to Lys-196, Pro-199 to Lys-238, Val-241 to Lys-280, Glu-325 to Arg-365, and Lys-402 to Pro-441.

Interacts with SPAG16 and SPAG17. Highly expressed in testis. Not detected in prostate, ovary, spleen, thymus, small intestine, colon and peripheral blood leukocytes.

The protein localises to the cytoplasm. Its subcellular location is the cytoskeleton. It localises to the cell projection. It is found in the cilium. The protein resides in the flagellum. The protein localises to the cilium axoneme. Functionally, important for structural integrity of the central apparatus in the sperm tail and for flagellar motility. The polypeptide is Sperm-associated antigen 6 (Spag6) (Mus musculus (Mouse)).